The sequence spans 216 residues: Uracil phosphoribosyltransferase (216 aa).

Residues Arg-84, Arg-109, and 137 to 145 each bind 5-phospho-alpha-D-ribose 1-diphosphate; that span reads DPMLATGGS. Residues Ile-202 and 207 to 209 each bind uracil; that span reads GDA. Asp-208 is a 5-phospho-alpha-D-ribose 1-diphosphate binding site.

This sequence belongs to the UPRTase family. It depends on Mg(2+) as a cofactor.

It carries out the reaction UMP + diphosphate = 5-phospho-alpha-D-ribose 1-diphosphate + uracil. It functions in the pathway pyrimidine metabolism; UMP biosynthesis via salvage pathway; UMP from uracil: step 1/1. With respect to regulation, allosterically activated by GTP. Catalyzes the conversion of uracil and 5-phospho-alpha-D-ribose 1-diphosphate (PRPP) to UMP and diphosphate. This is Uracil phosphoribosyltransferase from Nostoc sp. (strain PCC 7120 / SAG 25.82 / UTEX 2576).